A 306-amino-acid chain; its full sequence is UDP-N-acetylenolpyruvoylglucosamine reductase (306 aa).

Positions 34 to 199 (RVGGPAQLLF…TSVRLRGAIA (166 aa)) constitute an FAD-binding PCMH-type domain. R179 is a catalytic residue. S228 acts as the Proton donor in catalysis. The active site involves E298.

This sequence belongs to the MurB family. FAD serves as cofactor.

Its subcellular location is the cytoplasm. It catalyses the reaction UDP-N-acetyl-alpha-D-muramate + NADP(+) = UDP-N-acetyl-3-O-(1-carboxyvinyl)-alpha-D-glucosamine + NADPH + H(+). It participates in cell wall biogenesis; peptidoglycan biosynthesis. In terms of biological role, cell wall formation. This is UDP-N-acetylenolpyruvoylglucosamine reductase from Rhodopseudomonas palustris (strain BisA53).